Reading from the N-terminus, the 395-residue chain is Phosphopentomutase (395 aa).

Mn(2+) contacts are provided by Asp10, Asp294, His299, Asp335, His336, and His347.

It belongs to the phosphopentomutase family. The cofactor is Mn(2+).

The protein resides in the cytoplasm. The catalysed reaction is 2-deoxy-alpha-D-ribose 1-phosphate = 2-deoxy-D-ribose 5-phosphate. It carries out the reaction alpha-D-ribose 1-phosphate = D-ribose 5-phosphate. It participates in carbohydrate degradation; 2-deoxy-D-ribose 1-phosphate degradation; D-glyceraldehyde 3-phosphate and acetaldehyde from 2-deoxy-alpha-D-ribose 1-phosphate: step 1/2. Isomerase that catalyzes the conversion of deoxy-ribose 1-phosphate (dRib-1-P) and ribose 1-phosphate (Rib-1-P) to deoxy-ribose 5-phosphate (dRib-5-P) and ribose 5-phosphate (Rib-5-P), respectively. The chain is Phosphopentomutase from Actinobacillus succinogenes (strain ATCC 55618 / DSM 22257 / CCUG 43843 / 130Z).